The following is a 341-amino-acid chain: UDP-3-O-acylglucosamine N-acyltransferase (341 aa).

The active-site Proton acceptor is the His241.

It belongs to the transferase hexapeptide repeat family. LpxD subfamily. As to quaternary structure, homotrimer.

It carries out the reaction a UDP-3-O-[(3R)-3-hydroxyacyl]-alpha-D-glucosamine + a (3R)-hydroxyacyl-[ACP] = a UDP-2-N,3-O-bis[(3R)-3-hydroxyacyl]-alpha-D-glucosamine + holo-[ACP] + H(+). The protein operates within bacterial outer membrane biogenesis; LPS lipid A biosynthesis. Catalyzes the N-acylation of UDP-3-O-acylglucosamine using 3-hydroxyacyl-ACP as the acyl donor. Is involved in the biosynthesis of lipid A, a phosphorylated glycolipid that anchors the lipopolysaccharide to the outer membrane of the cell. The polypeptide is UDP-3-O-acylglucosamine N-acyltransferase (Saccharophagus degradans (strain 2-40 / ATCC 43961 / DSM 17024)).